We begin with the raw amino-acid sequence, 301 residues long: Thymidylate synthase (301 aa).

Residues Arg38 and Arg163–Arg164 contribute to the dUMP site. Cys183 functions as the Nucleophile in the catalytic mechanism. Residues Arg203–Asp206, Asn214, and His244–Tyr246 each bind dUMP. (6R)-5,10-methylene-5,6,7,8-tetrahydrofolate is bound at residue Asp206. Ala300 is a (6R)-5,10-methylene-5,6,7,8-tetrahydrofolate binding site.

It belongs to the thymidylate synthase family. In terms of assembly, homodimer.

The enzyme catalyses dUMP + (6R)-5,10-methylene-5,6,7,8-tetrahydrofolate = 7,8-dihydrofolate + dTMP. The protein operates within pyrimidine metabolism; dTTP biosynthesis. Catalyzes the reductive methylation of deoxyuridylate to thymidylate. The protein is Thymidylate synthase of Varicella-zoster virus (strain Dumas) (HHV-3).